The chain runs to 463 residues: Endoglucanase (463 aa).

An N-terminal signal peptide occupies residues 1–27 (MVEKRKIFTVLCACGIGFTSYTSCISA). Positions 28–55 (AAIDNDTLINNGHKINSSIITNSSQVSA) are excised as a propeptide. Glutamate 130 acts as the Proton donor in catalysis. Residue aspartate 191 is the Nucleophile of the active site.

The protein belongs to the glycosyl hydrolase 8 (cellulase D) family. The N- and the C-terminus may be subjected to proteolysis.

The enzyme catalyses Endohydrolysis of (1-&gt;4)-beta-D-glucosidic linkages in cellulose, lichenin and cereal beta-D-glucans.. The protein is Endoglucanase of Bacillus sp. (strain KSM-330).